A 376-amino-acid chain; its full sequence is Succinate--CoA ligase [ADP-forming] subunit beta (376 aa).

The ATP-grasp domain maps to 9-234; the sequence is KAIAKKYGIP…ERELSELEKE (226 aa). ATP contacts are provided by residues K45, 52-54, E91, E94, and E99; that span reads GRG. 2 residues coordinate Mg(2+): N191 and D204. Substrate is bound by residues N254 and 311–313; that span reads GIT.

The protein belongs to the succinate/malate CoA ligase beta subunit family. In terms of assembly, heterotetramer of two alpha and two beta subunits. The cofactor is Mg(2+).

It carries out the reaction succinate + ATP + CoA = succinyl-CoA + ADP + phosphate. The enzyme catalyses GTP + succinate + CoA = succinyl-CoA + GDP + phosphate. The protein operates within carbohydrate metabolism; tricarboxylic acid cycle; succinate from succinyl-CoA (ligase route): step 1/1. Its function is as follows. Succinyl-CoA synthetase functions in the citric acid cycle (TCA), coupling the hydrolysis of succinyl-CoA to the synthesis of either ATP or GTP and thus represents the only step of substrate-level phosphorylation in the TCA. The beta subunit provides nucleotide specificity of the enzyme and binds the substrate succinate, while the binding sites for coenzyme A and phosphate are found in the alpha subunit. The chain is Succinate--CoA ligase [ADP-forming] subunit beta from Ignicoccus hospitalis (strain KIN4/I / DSM 18386 / JCM 14125).